Consider the following 838-residue polypeptide: Translation initiation factor IF-2 (838 aa).

Disordered regions lie at residues 30-60 (PHTAAEEHVSDSEKQSLLTHLKSSHKAKVEE) and 94-254 (QRSP…PTGP). 2 stretches are compositionally biased toward basic and acidic residues: residues 33-43 (AAEEHVSDSEK) and 96-136 (SPEE…EARR). The span at 137-173 (QPAPVAEPVAAQAAAPAPAPVVEPVQEAPVATAAPAA) shows a compositional bias: low complexity. Basic and acidic residues-rich tracts occupy residues 174 to 214 (DARK…EKAP) and 222 to 231 (TTDEESDGFR). The segment covering 232 to 245 (RGGRGKAKLKKRNA) has biased composition (basic residues). Residues 338 to 507 (ARAPVVTVMG…LLQAEVLELK (170 aa)) form the tr-type G domain. Residues 347 to 354 (GHVDHGKT) are G1. 347-354 (GHVDHGKT) provides a ligand contact to GTP. Residues 372 to 376 (GITQH) are G2. The interval 393–396 (DTPG) is G3. GTP is bound by residues 393–397 (DTPGH) and 447–450 (NKID). Residues 447 to 450 (NKID) are G4. The segment at 483-485 (SAK) is G5.

Belongs to the TRAFAC class translation factor GTPase superfamily. Classic translation factor GTPase family. IF-2 subfamily.

The protein resides in the cytoplasm. One of the essential components for the initiation of protein synthesis. Protects formylmethionyl-tRNA from spontaneous hydrolysis and promotes its binding to the 30S ribosomal subunits. Also involved in the hydrolysis of GTP during the formation of the 70S ribosomal complex. This is Translation initiation factor IF-2 from Pseudomonas fluorescens (strain ATCC BAA-477 / NRRL B-23932 / Pf-5).